A 120-amino-acid chain; its full sequence is Large ribosomal subunit protein uL14 (120 aa).

This sequence belongs to the universal ribosomal protein uL14 family. Part of the 50S ribosomal subunit. Forms a cluster with proteins L3 and L19. In the 70S ribosome, L14 and L19 interact and together make contacts with the 16S rRNA in bridges B5 and B8.

In terms of biological role, binds to 23S rRNA. Forms part of two intersubunit bridges in the 70S ribosome. The polypeptide is Large ribosomal subunit protein uL14 (Aster yellows witches'-broom phytoplasma (strain AYWB)).